Reading from the N-terminus, the 187-residue chain is Auxin-binding protein T92 (187 aa).

The first 20 residues, 1-20 (MARHIIILVAVFWFATAEAS), serve as a signal peptide directing secretion. Cys-22 and Cys-177 are oxidised to a cystine. 3 residues coordinate Zn(2+): His-78, His-80, and Glu-84. A glycan (N-linked (GlcNAc...) asparagine) is linked at Asn-117. His-128 serves as a coordination point for Zn(2+). The Prevents secretion from ER motif lies at 184–187 (KDEL).

As to quaternary structure, homodimer.

The protein resides in the endoplasmic reticulum lumen. This is probably a receptor for the plant hormone auxin. This is Auxin-binding protein T92 (T92) from Nicotiana tabacum (Common tobacco).